The primary structure comprises 479 residues: MNFETIIGLEVHVELNTNSKIFSPSSAHFGEDPNANTNVIDWSFPGVLPVMNKGVIDAGIKAALALNMDIHKEMHFDRKNYFYPDNPKAYQISQFDEPIGYNGWIDIKLEDGSTKKIRIERAHLEEDAGKNTHGTDGYSYVDLNRQGVPLIEIVSEADMRSPEEAYAYLTALKEIIQYTGISDVKMEEGSMRVDANISLRPYGQEQFGTKTELKNLNSFSNVRKGLEFEVERQAKLLRSGGAIRQETRRYDEANKGTILMRVKEGAADYRYFPEPDLPLYEIDDAWIDEMRAQLPQFPAQRRAKYEEELGLSAYDASQLTATKALSDFFETAVSLGGDAKQVSNWLQGEVAQFLNAEGKTIEEIALTPENLVEMIAIIADGTISSKMAKKVFVHLAKNGGSARAYVEKAGLVQISDPAVLVPIIHQVFADNEAAVADFKSGKRNADKAFTGFLMKATKGQANPQVAQQLLAQELQKLRD.

Belongs to the GatB/GatE family. GatB subfamily. As to quaternary structure, heterotrimer of A, B and C subunits.

It catalyses the reaction L-glutamyl-tRNA(Gln) + L-glutamine + ATP + H2O = L-glutaminyl-tRNA(Gln) + L-glutamate + ADP + phosphate + H(+). It carries out the reaction L-aspartyl-tRNA(Asn) + L-glutamine + ATP + H2O = L-asparaginyl-tRNA(Asn) + L-glutamate + ADP + phosphate + 2 H(+). In terms of biological role, allows the formation of correctly charged Asn-tRNA(Asn) or Gln-tRNA(Gln) through the transamidation of misacylated Asp-tRNA(Asn) or Glu-tRNA(Gln) in organisms which lack either or both of asparaginyl-tRNA or glutaminyl-tRNA synthetases. The reaction takes place in the presence of glutamine and ATP through an activated phospho-Asp-tRNA(Asn) or phospho-Glu-tRNA(Gln). The protein is Aspartyl/glutamyl-tRNA(Asn/Gln) amidotransferase subunit B of Streptococcus pyogenes serotype M49 (strain NZ131).